A 176-amino-acid polypeptide reads, in one-letter code: HTH-type transcriptional regulator DctR (176 aa).

An HTH luxR-type domain is found at 109–174; sequence VPEAAVSLSR…ELVRHQHIDY (66 aa). The H-T-H motif DNA-binding region spans 133–152; the sequence is TEDILEKLKISLKTFYCHKH.

In terms of biological role, may act as a transcriptional regulator of dctA. This is HTH-type transcriptional regulator DctR (dctR) from Escherichia coli (strain K12).